A 188-amino-acid chain; its full sequence is MRRSKKERQKLLQQTIKSTPFITDEELAGKFGVSIQTIRLDRLELSIPELRERIKNVAEQTLDDEVKSLSLDEVIGEIIDLELDGQAISILEVRREHVFSRNQIARGHHLFAQANSLAVAVIDDELALTASANIRFTRQVKEGERVVAKAKVTAVEKEKGRTVVEVNSYVGEEVVFSGSFDMYRSKQS.

Belongs to the FapR family.

Functionally, transcriptional factor involved in regulation of membrane lipid biosynthesis by repressing genes involved in fatty acid and phospholipid metabolism. This Bacillus velezensis (strain DSM 23117 / BGSC 10A6 / LMG 26770 / FZB42) (Bacillus amyloliquefaciens subsp. plantarum) protein is Transcription factor FapR.